A 346-amino-acid chain; its full sequence is Protein RecA (346 aa).

66 to 73 (GPESSGKT) provides a ligand contact to ATP.

The protein belongs to the RecA family.

It localises to the cytoplasm. Can catalyze the hydrolysis of ATP in the presence of single-stranded DNA, the ATP-dependent uptake of single-stranded DNA by duplex DNA, and the ATP-dependent hybridization of homologous single-stranded DNAs. It interacts with LexA causing its activation and leading to its autocatalytic cleavage. The protein is Protein RecA of Aromatoleum aromaticum (strain DSM 19018 / LMG 30748 / EbN1) (Azoarcus sp. (strain EbN1)).